The primary structure comprises 171 residues: Putative F-box protein At1g32020 (171 aa).

The 47-residue stretch at 3–49 folds into the F-box domain; it reads CDRISTLPDHLVAKIVSYLGIKDSIKTSVLSKRWEFVWLKVVGLDLK.

The chain is Putative F-box protein At1g32020 from Arabidopsis thaliana (Mouse-ear cress).